We begin with the raw amino-acid sequence, 352 residues long: C-C chemokine receptor type 5 (352 aa).

Over 1 to 30 the chain is Extracellular; that stretch reads MDYQVSSPTYDIDYDTSEPCQKINVKQIAA. A Sulfotyrosine modification is found at Tyr-3. Residues Ser-6 and Ser-7 are each glycosylated (O-linked (GalNAc...) serine). Sulfotyrosine occurs at positions 10 and 14. Intrachain disulfides connect Cys-20-Cys-269 and Cys-101-Cys-178. A helical membrane pass occupies residues 31 to 58; the sequence is RLLPPLYSLVFIFGFVGNMLVILVLINC. Over 59-68 the chain is Cytoplasmic; that stretch reads KRLKSMTDIY. A helical transmembrane segment spans residues 69 to 89; that stretch reads LLNLAISDLFFLLTVPFWAHY. At 90–102 the chain is on the extracellular side; that stretch reads AAAQWDFGNTMCQ. Residues 103–124 traverse the membrane as a helical segment; that stretch reads LLTGLYFIGFFSGIFFIILLTI. Residues 125 to 141 lie on the Cytoplasmic side of the membrane; it reads DRYLAIVHAVFALKART. A helical transmembrane segment spans residues 142-166; it reads VTFGVVTSVITWVVAVFASLPGIIF. The Extracellular segment spans residues 167-198; it reads TRSQKEGLHYTCSSHFPYSQYQFWKNFQTLKI. Residues 199-218 traverse the membrane as a helical segment; the sequence is VILGLVLPLLVMVICYSGIL. The Cytoplasmic portion of the chain corresponds to 219 to 235; it reads KTLLRCRNEKKRHRAVR. The chain crosses the membrane as a helical span at residues 236–260; it reads LIFTIMIVYFLFWAPYNIVLLLNTF. Residues 261-277 lie on the Extracellular side of the membrane; that stretch reads QEFFGLNNCSSSNRLDQ. A helical membrane pass occupies residues 278–301; sequence AMQVTETLGMTHCCINPIIYAFVG. Residues 302-352 are Cytoplasmic-facing; that stretch reads EKFRNYLLVFFQKHIAKHFCKCCSIFQQEAPERASSVYTRSTGEQEISVGL. S-palmitoyl cysteine attachment occurs at residues Cys-321, Cys-323, and Cys-324. Ser-336, Ser-337, Ser-342, and Ser-349 each carry phosphoserine; by BARK1.

It belongs to the G-protein coupled receptor 1 family. As to quaternary structure, interacts with PRAF2. Efficient ligand binding to CCL3/MIP-1alpha and CCL4/MIP-1beta requires sulfation, O-glycosylation and sialic acid modifications. Glycosylation on Ser-6 is required for efficient binding of CCL4. Interacts with GRK2. Interacts with ARRB1 and ARRB2. Interacts with CNIH4. Interacts with S100A4; this interaction stimulates T-lymphocyte chemotaxis. Post-translationally, sulfated on at least 2 of the N-terminal tyrosines. Sulfation is required for efficient binding of the chemokines, CCL3 and CCL4. Palmitoylation in the C-terminal is important for cell surface expression. In terms of processing, phosphorylation on serine residues in the C-terminal is stimulated by binding CC chemokines especially by APO-RANTES. Post-translationally, O-glycosylated, but not N-glycosylated. Ser-6 appears to be the major site even if Ser-7 may be also O-glycosylated. Also sialylated glycans present which contribute to chemokine binding. Thr-16 and Ser-17 may also be glycosylated and, if so, with small moieties such as a T-antigen.

The protein localises to the cell membrane. Receptor for a number of inflammatory CC-chemokines including CCL3/MIP-1-alpha, CCL4/MIP-1-beta and RANTES and subsequently transduces a signal by increasing the intracellular calcium ion level. May play a role in the control of granulocytic lineage proliferation or differentiation. Participates in T-lymphocyte migration to the infection site by acting as a chemotactic receptor. The sequence is that of C-C chemokine receptor type 5 (CCR5) from Nomascus leucogenys (Northern white-cheeked gibbon).